A 495-amino-acid polypeptide reads, in one-letter code: MASILWTTSLKVLLALIVWIGTTIIYNIYFHPLHSFPGPVLARATRLYSAYIRAVGLSERKSLQWHNQYGGIVRIAPDELSFNTGSAWNDIYGTKSRKSQRLQKDPHFYMGATAPNGEKNMGAVGDEDHSRIRSVLAHAFTDTALHAQESLIRAHVDRLVQRLQDLHGKPTDIVRWMHHHSYDVIAHLCFGQDLDALGSKDWFPPARVVFEGIREGVTLIEVLRFVPFKATVLDILVQAFGKARRENFNASVARAMLRLRLAETTSIDFISYILRVKESAKELTRSELTANVALLIDAGSETTATMLSGCLFYLSLNRTTLEELTHKLREDFRTHDQLSLQNLAKMKLLTYVIQESLRIYPPLPATLPRLTPATGAMINGVLIPPKTRVGMNAFAAYHSTQNFADADMFIPQRWDNTNDRFARDQRHVHRPFSLGSRGCLGKNLAWAEIRLTLACLLWNFDVILEPGQEEWHGKQLTWFIWNKDPLYMRFAPRTK.

Residues V12–P32 traverse the membrane as a helical segment. N-linked (GlcNAc...) asparagine glycans are attached at residues N249 and N317. C439 contacts heme.

This sequence belongs to the cytochrome P450 family. The cofactor is heme.

The protein resides in the membrane. It functions in the pathway mycotoxin biosynthesis. Its function is as follows. Cytochrome P450 monooxygenase; part of the gene cluster that mediates the biosynthesis of the diterpene glucoside brassicicene C. In the first step of the brassicicene C biosynthesis, the bifunctional diterpene synthase bsc8 that possesses both prenyl transferase and terpene cyclase activity, converts isopentenyl diphosphate and dimethylallyl diphosphate into geranylgeranyl diphosphate (GGDP) that is further converted into fusicocca-2,10(14)-diene, the first precursor for brassicicene C. Fusicocca-2,10(14)-diene is then substrate of cytochrome P450 monooxygenase bsc1 for hydroxylation at the C-8 position. Oxidation at C-16 position to aldehyde is then catalyzed by the cytochrome P450 monooyxygenase bsc7, yielding fusicocca-2,10(14)-diene-8-beta,16-diol. Follows the isomerization of the double bond and reduction of aldehyde to alcohol catalyzed by the short-chain dehydrogenase/reductase bsc3 to yield the diol compound fusicocca-1,10(14)-diene-8 beta,16-diol. The next step is the oxidation at the C-3 position of fusicocca-2,10(14)-diene-8-beta,16-diol catalyzed by the alpha-ketoglutarate dependent dioxygenase bsc9, to produce a triol compound. Methylation of the hydroxy group at position 16 is performed by the methyltransferase bsc6. 16-O-methylation is followed by oxidation at the C-13 position to ketone and an alkyl shift of the methyl group leads to brassicicene C. Although the probable acetyltransferase bsc4 is included in the gene cluster, no acetylation reactions are necessary for brassicicene C biosynthesis. However, the fact that brassicicene E, which is a structurally related compound having an acetoxy group at position 12, was previously isolated from another strain of A.brassicicola suggests that the ATCC 96836 strain might also produce a small amount of brassicicene E. This Alternaria brassicicola (Dark leaf spot agent) protein is Fusicoccadiene 8-ol C-16 hydroxylase.